The chain runs to 418 residues: Peptide chain release factor subunit 1 (418 aa).

This sequence belongs to the eukaryotic release factor 1 family. As to quaternary structure, heterodimer of two subunits, one of which binds GTP.

The protein resides in the cytoplasm. Its function is as follows. Directs the termination of nascent peptide synthesis (translation) in response to the termination codons UAA, UAG and UGA. The chain is Peptide chain release factor subunit 1 from Haloarcula marismortui (strain ATCC 43049 / DSM 3752 / JCM 8966 / VKM B-1809) (Halobacterium marismortui).